The primary structure comprises 156 residues: Small ribosomal subunit protein uS7 (156 aa).

The protein belongs to the universal ribosomal protein uS7 family. In terms of assembly, part of the 30S ribosomal subunit. Contacts proteins S9 and S11.

Functionally, one of the primary rRNA binding proteins, it binds directly to 16S rRNA where it nucleates assembly of the head domain of the 30S subunit. Is located at the subunit interface close to the decoding center, probably blocks exit of the E-site tRNA. This chain is Small ribosomal subunit protein uS7, found in Azorhizobium caulinodans (strain ATCC 43989 / DSM 5975 / JCM 20966 / LMG 6465 / NBRC 14845 / NCIMB 13405 / ORS 571).